A 260-amino-acid polypeptide reads, in one-letter code: HTH-type transcriptional repressor NanR (260 aa).

The disordered stretch occupies residues 1-22 (MNAFDSQAEDSPTSLGRSLRRR). Residues 27–95 (KKLSEMVEEE…NGERARVSRP (69 aa)) enclose the HTH gntR-type domain. Residues 55–74 (ERELMAFFNVGRPSVREALA) constitute a DNA-binding region (H-T-H motif).

It belongs to the NanR family.

Transcriptional repressor that controls expression of the genes required for the catabolism of sialic acids. This chain is HTH-type transcriptional repressor NanR, found in Salmonella newport (strain SL254).